We begin with the raw amino-acid sequence, 219 residues long: Elongation factor Ts (219 aa).

Residues 83 to 86 (TDFV) are involved in Mg(2+) ion dislocation from EF-Tu.

This sequence belongs to the EF-Ts family.

It localises to the cytoplasm. Associates with the EF-Tu.GDP complex and induces the exchange of GDP to GTP. It remains bound to the aminoacyl-tRNA.EF-Tu.GTP complex up to the GTP hydrolysis stage on the ribosome. The sequence is that of Elongation factor Ts from Synechococcus sp. (strain WH7803).